The chain runs to 522 residues: N-acetylgalactosamine-6-sulfatase (522 aa).

A signal peptide spans 1-26 (MAAVVAATRWWQLLLVLSAAGMGASG). The tract at residues 27–379 (APQPPNILLL…PTLLQGRLMD (353 aa)) is catalytic domain. Residues Asp39, Asp40, and Cys79 each contribute to the Ca(2+) site. The active-site Nucleophile is the Cys79. Cys79 carries the post-translational modification 3-oxoalanine (Cys). His142 is an active-site residue. N-linked (GlcNAc...) asparagine glycosylation is present at Asn204. Residues Asp288 and Asn289 each coordinate Ca(2+). Residues Cys308 and Cys419 are joined by a disulfide bond. An N-linked (GlcNAc...) asparagine glycan is attached at Asn423. 2 disulfide bridges follow: Cys489–Cys518 and Cys501–Cys507.

The protein belongs to the sulfatase family. In terms of assembly, homodimer. Requires Ca(2+) as cofactor. Post-translationally, the conversion to 3-oxoalanine (also known as C-formylglycine, FGly), of a serine or cysteine residue in prokaryotes and of a cysteine residue in eukaryotes, is critical for catalytic activity.

The protein localises to the lysosome. It carries out the reaction Hydrolysis of the 6-sulfate groups of the N-acetyl-D-galactosamine 6-sulfate units of chondroitin sulfate and of the D-galactose 6-sulfate units of keratan sulfate.. The protein is N-acetylgalactosamine-6-sulfatase (GALNS) of Homo sapiens (Human).